The chain runs to 5148 residues: E3 ubiquitin-protein ligase RNF213 (5148 aa).

Residues 38 to 48 show a composition bias toward polar residues; it reads DNTLVVSSTPE. The interval 38 to 341 is disordered; that stretch reads DNTLVVSSTP…QAAAPEPTSA (304 aa). Positions 69 to 78 are enriched in basic and acidic residues; it reads PGKELEKPEE. Positions 101–113 are enriched in polar residues; that stretch reads GTISSSEAPSSGL. Low complexity predominate over residues 130 to 146; that stretch reads PQNQAQQGGAASQPGHP. Phosphoserine is present on S196. Basic and acidic residues-rich tracts occupy residues 233–245, 257–267, and 279–289; these read SKGE…KKVP, AGKETGEDVRK, and KHGDQEAELKG. Residues 319–335 show a composition bias toward low complexity; sequence AAAVKTQQAAAPQQAAA. A Glycyl lysine isopeptide (Lys-Gly) (interchain with G-Cter in SUMO2) cross-link involves residue K1128. ATP contacts are provided by residues 1957–1962, E2060, A2114, D2116, and R2177; that span reads GVGKSL. S2234 is subject to Phosphoserine. Residues K2460 and S2535 each contribute to the ATP site. The stretch at 3435–3465 forms a coiled coil; that stretch reads EEMEIETSQSKELAEEQMEVEDSEEMKKASD. Zn(2+)-binding residues include C3947, C3950, C3962, H3964, C3967, C3970, C3982, C3985, C4451, and H4455. The RING-type zinc-finger motif lies at 3947–3986; sequence CFICHGDAQDPVCLPCDHVYCLRCIQTWLIPGQMMCPYCL. The RZ-type zinc-finger motif lies at 4429-4501; the sequence is MPEDLLVHAR…IRNNEDRTQT (73 aa). Catalysis depends on C4462, which acts as the Nucleophile; for E3 ubiquitin-lipopolysaccharide ligase activity. Zn(2+)-binding residues include C4471 and C4474.

The protein belongs to the AAA ATPase family. In terms of assembly, monomer. Interacts with UBE2L3/UBCH7; UBE2L3/UBCH7 is the most efficient ubiquitin-conjugating enzyme E2 for the ubiquitin ligase activity. Interacts with UBE2N/UBC13; promoting 'Lys-63'-linked ubiquitination of target proteins.

Its subcellular location is the cytoplasm. The protein resides in the cytosol. It localises to the lipid droplet. It catalyses the reaction S-ubiquitinyl-[E2 ubiquitin-conjugating enzyme]-L-cysteine + [acceptor protein]-L-lysine = [E2 ubiquitin-conjugating enzyme]-L-cysteine + N(6)-ubiquitinyl-[acceptor protein]-L-lysine.. The catalysed reaction is ATP + H2O = ADP + phosphate + H(+). Its pathway is protein modification; protein ubiquitination. Its function is as follows. Atypical E3 ubiquitin ligase that can catalyze ubiquitination of both proteins and lipids, and which is involved in various processes, such as lipid metabolism, angiogenesis and cell-autonomous immunity. Acts as a key immune sensor by catalyzing ubiquitination of the lipid A moiety of bacterial lipopolysaccharide (LPS) via its RZ-type zinc-finger: restricts the proliferation of cytosolic bacteria, such as Salmonella, by generating the bacterial ubiquitin coat through the ubiquitination of LPS. Also acts indirectly by mediating the recruitment of the LUBAC complex, which conjugates linear polyubiquitin chains. Ubiquitination of LPS triggers cell-autonomous immunity, such as antibacterial autophagy, leading to degradation of the microbial invader. Involved in lipid metabolism by regulating fat storage and lipid droplet formation; act by inhibiting the lipolytic process. Also regulates lipotoxicity by inhibiting desaturation of fatty acids. Also acts as an E3 ubiquitin-protein ligase via its RING-type zinc finger: mediates 'Lys-63'-linked ubiquitination of target proteins. Involved in the non-canonical Wnt signaling pathway in vascular development: acts by mediating ubiquitination and degradation of FLNA and NFATC2 downstream of RSPO3, leading to inhibit the non-canonical Wnt signaling pathway and promoting vessel regression. Also has ATPase activity; ATPase activity is required for ubiquitination of LPS. In Mus musculus (Mouse), this protein is E3 ubiquitin-protein ligase RNF213.